We begin with the raw amino-acid sequence, 170 residues long: MMKFMCIFVCAIAAVSANAYGRQGYGSVPVGGYAYQVQPALTVKAIVPAGGYGGGSYGGGYGNNNYGRSIEVPVSAHYTSSRGYGAAPVDRQAISLAKLSLAAPNAGAPLVWKEPRQIVERSYGPQQSYGQKHSYGYGEQAQGASAAAASSSVAGQHSGYKNSGYKNSSY.

Positions 1–17 (MMKFMCIFVCAIAAVSA) are cleaved as a signal peptide. The span at 146 to 159 (AAAASSSVAGQHSG) shows a compositional bias: low complexity. The segment at 146–170 (AAAASSSVAGQHSGYKNSGYKNSSY) is disordered. The segment covering 160–170 (YKNSGYKNSSY) has biased composition (polar residues).

It belongs to the chorion protein S15/S18 family.

The protein localises to the secreted. Functionally, chorion membrane (egg shell) protein; plays a role in protecting the egg from the environment. In Drosophila virilis (Fruit fly), this protein is Chorion protein S18 (Cp18).